Here is a 932-residue protein sequence, read N- to C-terminus: Glycine dehydrogenase (decarboxylating) (932 aa).

Lys685 bears the N6-(pyridoxal phosphate)lysine mark.

This sequence belongs to the GcvP family. In terms of assembly, the glycine cleavage system is composed of four proteins: P, T, L and H. Pyridoxal 5'-phosphate serves as cofactor.

The catalysed reaction is N(6)-[(R)-lipoyl]-L-lysyl-[glycine-cleavage complex H protein] + glycine + H(+) = N(6)-[(R)-S(8)-aminomethyldihydrolipoyl]-L-lysyl-[glycine-cleavage complex H protein] + CO2. Functionally, the glycine cleavage system catalyzes the degradation of glycine. The P protein binds the alpha-amino group of glycine through its pyridoxal phosphate cofactor; CO(2) is released and the remaining methylamine moiety is then transferred to the lipoamide cofactor of the H protein. This is Glycine dehydrogenase (decarboxylating) from Brucella melitensis biotype 1 (strain ATCC 23456 / CCUG 17765 / NCTC 10094 / 16M).